Reading from the N-terminus, the 358-residue chain is Pseudouridylate synthase RPUSD4, mitochondrial (358 aa).

The N-terminal 12 residues, 1–12 (MRHAREVTFARL), are a transit peptide targeting the mitochondrion.

The protein belongs to the pseudouridine synthase RluA family.

It is found in the mitochondrion matrix. The protein localises to the nucleus. Its subcellular location is the cytoplasm. It catalyses the reaction uridine in 5S rRNA = pseudouridine in 5S rRNA. The catalysed reaction is a uridine in tRNA = a pseudouridine in tRNA. It carries out the reaction a uridine in mRNA = a pseudouridine in mRNA. Its function is as follows. Catalyzes uridine to pseudouridine isomerization (pseudouridylation) of different mitochondrial RNA substrates. Acts on position 1397 in 16S mitochondrial ribosomal RNA (16S mt-rRNA). This modification is required for the assembly of 16S mt-rRNA into a functional mitochondrial ribosome. Acts on position 39 in mitochondrial tRNA(Phe). Also catalyzes pseudouridylation of mRNAs in nucleus: acts as a regulator of pre-mRNA splicing by mediating pseudouridylation of pre-mRNAs at locations associated with alternatively spliced regions. Pseudouridylation of pre-mRNAs near splice sites directly regulates mRNA splicing and mRNA 3'-end processing. The sequence is that of Pseudouridylate synthase RPUSD4, mitochondrial from Danio rerio (Zebrafish).